The following is a 489-amino-acid chain: Coronin-1B (489 aa).

Position 2 is a phosphoserine; by PKC (Ser-2). WD repeat units lie at residues 18–72 (QPVK…GRID), 73–122 (KAYP…SPLT), 123–166 (EPVV…GTAE), 167–210 (ELYR…RGTL), 211–256 (VAER…ENLE), and 257–296 (EPMA…RYFE). Positions 408–444 (RRNVLSDSRPAMAPGSSHLGAPASTTTAADATPSGSL) are disordered. Positions 428 to 441 (APASTTTAADATPS) are enriched in low complexity. Residues 449 to 474 (EAGKLEEVMQELRALRALVKEQGDRI) are a coiled coil.

This sequence belongs to the WD repeat coronin family. In terms of assembly, forms homooligomers, but does not form complexes with the other coronins. Interacts with Arp2/3 complex components, including ACTR2, ARPC1B and ARPC2. Binds actin. In terms of processing, phosphorylation by PKC on Ser-2 regulates the interaction with the Arp2/3 complex and cell motility in fibroblasts. Phosphorylation does not seem to affect subcellular location.

The protein localises to the cytoplasm. The protein resides in the cytoskeleton. It is found in the stress fiber. Regulates leading edge dynamics and cell motility in fibroblasts. May be involved in cytokinesis and signal transduction. This Homo sapiens (Human) protein is Coronin-1B (CORO1B).